The primary structure comprises 288 residues: Xyloglucan endotransglucosylase protein 8 (288 aa).

The N-terminal stretch at 1–25 is a signal peptide; that stretch reads MAASPYSIFAVQLLLLASWMLSSSS. Residues 26–215 form the GH16 domain; that stretch reads SNFNQDFNIA…WTQAPFTTSY (190 aa). E102 serves as the catalytic Nucleophile. The active-site Proton donor is E106. Residue E106 participates in xyloglucan binding. Residue N110 is glycosylated (N-linked (GlcNAc...) asparagine). Xyloglucan-binding positions include 119–121, 129–131, 194–195, and G199; these read HTN, ERE, and EW. 2 disulfides stabilise this stretch: C224/C233 and C268/C282. R273 is a binding site for xyloglucan.

This sequence belongs to the glycosyl hydrolase 16 family. XTH group 2 subfamily. In terms of processing, contains at least one intrachain disulfide bond essential for its enzymatic activity. As to expression, highly expressed in mature fruits. Very low expression in leaves, flowers, calyces and stems.

Its subcellular location is the secreted. It is found in the cell wall. The protein localises to the extracellular space. It localises to the apoplast. The enzyme catalyses breaks a beta-(1-&gt;4) bond in the backbone of a xyloglucan and transfers the xyloglucanyl segment on to O-4 of the non-reducing terminal glucose residue of an acceptor, which can be a xyloglucan or an oligosaccharide of xyloglucan.. Functionally, catalyzes xyloglucan endotransglycosylation (XET). Cleaves and religates xyloglucan polymers. Does not catalyze xyloglucan endohydrolysis (XEH). Overexpression in Arabidopsis transgenic plants causes accelerated dark-induced leaf senescence and higher lipid peroxidation of the leaf cells. Overexpression in transgenic tomato plants promotes fruit ripening and softening. Probably involved in cell wall restructuring during postharvest fruit softening. The sequence is that of Xyloglucan endotransglucosylase protein 8 from Diospyros kaki (Kaki persimmon).